The primary structure comprises 331 residues: Hydroxyacylglutathione hydrolase 1, mitochondrial (331 aa).

Residues 1 to 76 constitute a mitochondrion transit peptide; sequence MPVISKASST…HFCSISNMPS (76 aa). The Zn(2+) site is built by histidine 131 and histidine 133. 2 residues coordinate Fe cation: aspartate 135 and histidine 136. Residues histidine 189 and aspartate 208 each contribute to the Zn(2+) site. Aspartate 208 serves as a coordination point for Fe cation. Residue 246–248 coordinates substrate; that stretch reads REN.

This sequence belongs to the metallo-beta-lactamase superfamily. Glyoxalase II family. The cofactor is Fe(2+). Fe(3+) serves as cofactor. Zn(2+) is required as a cofactor. Mainly expressed in roots, flowers and flower buds. Also detected in leaves.

Its subcellular location is the mitochondrion. The catalysed reaction is an S-(2-hydroxyacyl)glutathione + H2O = a 2-hydroxy carboxylate + glutathione + H(+). Its pathway is secondary metabolite metabolism; methylglyoxal degradation; (R)-lactate from methylglyoxal: step 2/2. Its function is as follows. Thiolesterase that catalyzes the hydrolysis of S-D-lactoyl-glutathione to form glutathione and D-lactic acid. This is Hydroxyacylglutathione hydrolase 1, mitochondrial (GLX2-1) from Arabidopsis thaliana (Mouse-ear cress).